A 65-amino-acid chain; its full sequence is uncharacterized protein (65 aa).

Helical transmembrane passes span 4–24 (AWLF…DKVL) and 39–59 (LPIP…FIVF).

Its subcellular location is the membrane. This is an uncharacterized protein from Streptococcus pneumoniae serotype 2 (strain D39 / NCTC 7466).